Reading from the N-terminus, the 256-residue chain is Chloroplastic group IIB intron splicing facilitator CRS2, chloroplastic (256 aa).

Residues 1 to 45 constitute a chloroplast transit peptide; that stretch reads MSLLAAAIPSTSSHFSAPFLPSFRMPRKSLTAPLHRIRRPRPFTV. Y74 serves as a coordination point for tRNA. The Proton acceptor role is filled by H79. TRNA is bound by residues Y124, N126, and N172.

It belongs to the PTH family. CRS2 subfamily. As to quaternary structure, interacts with CAF1 and CAF2. Part of large ribonucleo-protein complexes that include group IIB introns and either CAF1 or CAF2.

It localises to the plastid. It is found in the chloroplast stroma. Required for the splicing of group IIB introns in chloroplasts. Forms complexes with either CAF1 or CAF2 which, in turn, interact with RNA and confer intron specificity of the splicing particles. Has no peptidyl-tRNA hydrolase activity. The polypeptide is Chloroplastic group IIB intron splicing facilitator CRS2, chloroplastic (CRS2) (Zea mays (Maize)).